The chain runs to 122 residues: MSAPDSITVTVADHNGVAVLSIGGEIDLITAAALEEAIGEVVADNPTALVIDLSAVEFLGSVGLKILAATSEKIGQSVKFGVVARGSVTRRPIHLMGLDKTFRLFSTLHDALTGVRGGRIDR.

The STAS domain maps to 7-115 (ITVTVADHNG…STLHDALTGV (109 aa)). A Phosphoserine modification is found at Ser61.

The protein belongs to the anti-sigma-factor antagonist family. As to quaternary structure, interacts with anti-sigma-F factor RsbW (UsfX). Its phosphorylation may prevent this interaction. Putative phosphorylation on Ser-61 may prevent interaction with RsbW.

In terms of biological role, positive regulator of sigma-F (SigF) activity. Binds to anti-sigma-F factor RsbW (UsfX) preventing its binding to SigF, thus activating transcription. The sequence is that of Anti-sigma-F factor antagonist RsfB (rsfB) from Mycobacterium tuberculosis (strain CDC 1551 / Oshkosh).